The following is a 185-amino-acid chain: MTTTSTTSVDGRTSSTLKATLSASGPNSNGPTPAVLPQKPKLTGWAQAAAKALPRQQQQQQQARKDDSVAVQPANTKTKTIASTAPPANIKGSSTANGSSTNKKFKRANKQPYNREEVRSYMHKLFQSYTAGEKSHSMKTYKQVLSETASGRVSTATDWGTVSSSKNKNKKYGCLSDIAKVLRNQ.

Composition is skewed to low complexity over residues 1–24 (MTTTSTTSVDGRTSSTLKATLSAS) and 46–62 (AQAAAKALPRQQQQQQQ). Disordered stretches follow at residues 1-116 (MTTT…YNRE) and 147-168 (ETASGRVSTATDWGTVSSSKNK). 3 stretches are compositionally biased toward polar residues: residues 73–83 (PANTKTKTIAS), 91–102 (KGSSTANGSSTN), and 147–166 (ETASGRVSTATDWGTVSSSK).

Interacts with IGO1, LSM12 and PBP1.

Its subcellular location is the cytoplasm. The protein localises to the nucleus. The chain is Protein PBP4 (PBP4) from Saccharomyces cerevisiae (strain ATCC 204508 / S288c) (Baker's yeast).